The chain runs to 563 residues: Delta-1-pyrroline-5-carboxylate dehydrogenase, mitochondrial (563 aa).

Residues 1-24 (MLLRSAALCRALLARRGRAAGLCR) constitute a mitochondrion transit peptide. At S44 the chain carries Phosphoserine. K52 is subject to N6-acetyllysine. K93, K99, K114, K130, and K175 each carry N6-acetyllysine; alternate. Residues K93, K99, K114, K130, and K175 each carry the N6-succinyllysine; alternate modification. Residues S208, K233, and 286–290 (GSVPT) contribute to the NAD(+) site. The active-site Proton acceptor is the E314. An N6-acetyllysine modification is found at K318. N6-succinyllysine is present on K347. C348 serves as the catalytic Nucleophile. An N6-acetyllysine mark is found at K365 and K376. An N6-succinyllysine modification is found at K395. NAD(+) is bound at residue E447. At K509 the chain carries N6-acetyllysine; alternate. Residue K509 is modified to N6-succinyllysine; alternate. Position 513 (S513) interacts with substrate. K531 carries the N6-acetyllysine modification.

This sequence belongs to the aldehyde dehydrogenase family. As to quaternary structure, homodimer.

The protein localises to the mitochondrion matrix. The enzyme catalyses L-glutamate 5-semialdehyde + NAD(+) + H2O = L-glutamate + NADH + 2 H(+). Its pathway is amino-acid degradation; L-proline degradation into L-glutamate; L-glutamate from L-proline: step 2/2. In terms of biological role, irreversible conversion of delta-1-pyrroline-5-carboxylate (P5C), derived either from proline or ornithine, to glutamate. This is a necessary step in the pathway interconnecting the urea and tricarboxylic acid cycles. The preferred substrate is glutamic gamma-semialdehyde, other substrates include succinic, glutaric and adipic semialdehydes. This is Delta-1-pyrroline-5-carboxylate dehydrogenase, mitochondrial (ALDH4A1) from Bos taurus (Bovine).